A 364-amino-acid polypeptide reads, in one-letter code: Alanine racemase (364 aa).

Residue Lys34 is the Proton acceptor; specific for D-alanine of the active site. Lys34 is modified (N6-(pyridoxal phosphate)lysine). Arg129 contributes to the substrate binding site. The active-site Proton acceptor; specific for L-alanine is the Tyr259. Met307 lines the substrate pocket.

Belongs to the alanine racemase family. The cofactor is pyridoxal 5'-phosphate.

The enzyme catalyses L-alanine = D-alanine. It participates in amino-acid biosynthesis; D-alanine biosynthesis; D-alanine from L-alanine: step 1/1. Functionally, catalyzes the interconversion of L-alanine and D-alanine. May also act on other amino acids. This Coxiella burnetii (strain RSA 331 / Henzerling II) protein is Alanine racemase (alr).